Here is a 607-residue protein sequence, read N- to C-terminus: uncharacterized protein (607 aa).

This is an uncharacterized protein from Ictalurid herpesvirus 1 (strain Auburn) (IcHV-1).